The chain runs to 257 residues: NAD-capped RNA hydrolase NudC (257 aa).

Substrate is bound by residues lysine 25 and arginine 69. Positions 98 and 101 each coordinate Zn(2+). Substrate is bound at residue glutamate 111. Zn(2+) is bound by residues cysteine 116 and cysteine 119. Substrate is bound at residue tyrosine 124. Residues 125–248 (PQIAPCIIVA…TVARRLIEDT (124 aa)) enclose the Nudix hydrolase domain. The a divalent metal cation site is built by alanine 158, glutamate 174, and glutamate 178. Residues 159–180 (GFVEVGETLEQAVAREVMEESG) carry the Nudix box motif. Residue 192 to 199 (QPWPFPQS) participates in substrate binding. Glutamate 219 lines the a divalent metal cation pocket. Alanine 241 lines the substrate pocket.

This sequence belongs to the Nudix hydrolase family. NudC subfamily. In terms of assembly, homodimer. The cofactor is Mg(2+). Mn(2+) is required as a cofactor. It depends on Zn(2+) as a cofactor.

It catalyses the reaction a 5'-end NAD(+)-phospho-ribonucleoside in mRNA + H2O = a 5'-end phospho-adenosine-phospho-ribonucleoside in mRNA + beta-nicotinamide D-ribonucleotide + 2 H(+). The enzyme catalyses NAD(+) + H2O = beta-nicotinamide D-ribonucleotide + AMP + 2 H(+). The catalysed reaction is NADH + H2O = reduced beta-nicotinamide D-ribonucleotide + AMP + 2 H(+). Its function is as follows. mRNA decapping enzyme that specifically removes the nicotinamide adenine dinucleotide (NAD) cap from a subset of mRNAs by hydrolyzing the diphosphate linkage to produce nicotinamide mononucleotide (NMN) and 5' monophosphate mRNA. The NAD-cap is present at the 5'-end of some mRNAs and stabilizes RNA against 5'-processing. Has preference for mRNAs with a 5'-end purine. Catalyzes the hydrolysis of a broad range of dinucleotide pyrophosphates. In Escherichia fergusonii (strain ATCC 35469 / DSM 13698 / CCUG 18766 / IAM 14443 / JCM 21226 / LMG 7866 / NBRC 102419 / NCTC 12128 / CDC 0568-73), this protein is NAD-capped RNA hydrolase NudC.